Consider the following 163-residue polypeptide: SsrA-binding protein (163 aa).

The protein belongs to the SmpB family.

Its subcellular location is the cytoplasm. Its function is as follows. Required for rescue of stalled ribosomes mediated by trans-translation. Binds to transfer-messenger RNA (tmRNA), required for stable association of tmRNA with ribosomes. tmRNA and SmpB together mimic tRNA shape, replacing the anticodon stem-loop with SmpB. tmRNA is encoded by the ssrA gene; the 2 termini fold to resemble tRNA(Ala) and it encodes a 'tag peptide', a short internal open reading frame. During trans-translation Ala-aminoacylated tmRNA acts like a tRNA, entering the A-site of stalled ribosomes, displacing the stalled mRNA. The ribosome then switches to translate the ORF on the tmRNA; the nascent peptide is terminated with the 'tag peptide' encoded by the tmRNA and targeted for degradation. The ribosome is freed to recommence translation, which seems to be the essential function of trans-translation. In Shewanella putrefaciens (strain CN-32 / ATCC BAA-453), this protein is SsrA-binding protein.